The sequence spans 594 residues: Membrane protein insertase YidC (594 aa).

Residues 7 to 27 (YFVAIALSVLILIAWQFFYVS) form a helical membrane-spanning segment. Positions 36–73 (AAEQAQQAQQTQQQPGAQPAAPGQALPGGAIPSAGESR) are disordered. The segment covering 37-65 (AEQAQQAQQTQQQPGAQPAAPGQALPGGA) has biased composition (low complexity). The next 4 helical transmembrane spans lie at 369-389 (LFGNFGIAILITTIVVKLIFF), 443-463 (WPILIQIPVFFALYKVIYVTI), 488-508 (LFGLLPFEGPAFLHLGIWPII), and 532-552 (FTWMPVVFTFMLASFPAGLVI).

This sequence belongs to the OXA1/ALB3/YidC family. Type 1 subfamily. In terms of assembly, interacts with the Sec translocase complex via SecD. Specifically interacts with transmembrane segments of nascent integral membrane proteins during membrane integration.

It localises to the cell inner membrane. Its function is as follows. Required for the insertion and/or proper folding and/or complex formation of integral membrane proteins into the membrane. Involved in integration of membrane proteins that insert both dependently and independently of the Sec translocase complex, as well as at least some lipoproteins. Aids folding of multispanning membrane proteins. This is Membrane protein insertase YidC from Rhizobium meliloti (strain 1021) (Ensifer meliloti).